The following is a 206-amino-acid chain: Alpha-1-acid glycoprotein 3 (206 aa).

The N-terminal stretch at 1–18 is a signal peptide; it reads MELHTVLIMLSLLPLLEA. Asparagine 33, asparagine 75, and asparagine 103 each carry an N-linked (GlcNAc...) asparagine glycan. Cysteine 90 and cysteine 183 are joined by a disulfide. The tract at residues 187-206 is disordered; sequence EKKHLELEKETKKDPEESQA.

The protein belongs to the calycin superfamily. Lipocalin family.

The protein localises to the secreted. Functionally, functions as a transport protein in the blood stream. Binds various ligands in the interior of its beta-barrel domain. Appears to function in modulating the activity of the immune system during the acute-phase reaction. The polypeptide is Alpha-1-acid glycoprotein 3 (Orm3) (Mus musculus (Mouse)).